Reading from the N-terminus, the 822-residue chain is Putative pentatricopeptide repeat-containing protein At5g13230, mitochondrial (822 aa).

The transit peptide at 1–70 directs the protein to the mitochondrion; that stretch reads MIVFMRIIHV…QKNDPISAKA (70 aa). 16 PPR repeats span residues 48 to 82, 83 to 117, 145 to 179, 180 to 210, 211 to 245, 246 to 280, 281 to 311, 312 to 346, 347 to 381, 382 to 416, 417 to 447, 448 to 482, 483 to 513, 514 to 548, 549 to 584, and 585 to 619; these read DSHAYGAMLRRCIQKNDPISAKAIHCDILKKGSCL, DLFATNILLNAYVKAGFDKDALNLFDEMPERNNVS, NPHVFTSFLKLFVSLDKAEICPWLHSPIVKLGYDS, NAFVGAALINAYSVCGSVDSARTVFEGILCK, DIVVWAGIVSCYVENGYFEDSLKLLSCMRMAGFMP, NNYTFDTALKASIGLGAFDFAKGVHGQILKTCYVL, DPRVGVGLLQLYTQLGDMSDAFKVFNEMPKN, DVVPWSFMIARFCQNGFCNEAVDLFIRMREAFVVP, NEFTLSSILNGCAIGKCSGLGEQLHGLVVKVGFDL, DIYVSNALIDVYAKCEKMDTAVKLFAELSSKNEVS, WNTVIVGYENLGEGGKAFSMFREALRNQVSV, TEVTFSSALGACASLASMDLGVQVHGLAIKTNNAK, KVAVSNSLIDMYAKCGDIKFAQSVFNEMETI, DVASWNALISGYSTHGLGRQALRILDIMKDRDCKP, NGLTFLGVLSGCSNAGLIDQGQECFESMIRDHGIEP, and CLEHYTCMVRLLGRSGQLDKAMKLIEGIPYEPSVM. The segment at 620 to 695 is type E motif; it reads IWRAMLSASM…EPGLSWIEHQ (76 aa). The segment at 696 to 726 is type E(+) motif; sequence GDVHYFSVGLSDHPDMKLINGMLEWLNMKAT. Residues 727–822 are type DYW motif; sequence RAGYVPDRNA…AGVCSCGDHW (96 aa).

This sequence belongs to the PPR family. PCMP-H subfamily.

Its subcellular location is the mitochondrion. The sequence is that of Putative pentatricopeptide repeat-containing protein At5g13230, mitochondrial (PCMP-H89) from Arabidopsis thaliana (Mouse-ear cress).